A 111-amino-acid polypeptide reads, in one-letter code: Large ribosomal subunit protein bL20c (111 aa).

The protein belongs to the bacterial ribosomal protein bL20 family.

The protein localises to the plastid. Its subcellular location is the chloroplast. Its function is as follows. Binds directly to 23S ribosomal RNA and is necessary for the in vitro assembly process of the 50S ribosomal subunit. It is not involved in the protein synthesizing functions of that subunit. The sequence is that of Large ribosomal subunit protein bL20c from Ostreococcus tauri.